Here is a 177-residue protein sequence, read N- to C-terminus: ATP synthase subunit delta (177 aa).

The protein belongs to the ATPase delta chain family. F-type ATPases have 2 components, F(1) - the catalytic core - and F(0) - the membrane proton channel. F(1) has five subunits: alpha(3), beta(3), gamma(1), delta(1), epsilon(1). F(0) has three main subunits: a(1), b(2) and c(10-14). The alpha and beta chains form an alternating ring which encloses part of the gamma chain. F(1) is attached to F(0) by a central stalk formed by the gamma and epsilon chains, while a peripheral stalk is formed by the delta and b chains.

The protein localises to the cell inner membrane. F(1)F(0) ATP synthase produces ATP from ADP in the presence of a proton or sodium gradient. F-type ATPases consist of two structural domains, F(1) containing the extramembraneous catalytic core and F(0) containing the membrane proton channel, linked together by a central stalk and a peripheral stalk. During catalysis, ATP synthesis in the catalytic domain of F(1) is coupled via a rotary mechanism of the central stalk subunits to proton translocation. Functionally, this protein is part of the stalk that links CF(0) to CF(1). It either transmits conformational changes from CF(0) to CF(1) or is implicated in proton conduction. This Leptothrix cholodnii (strain ATCC 51168 / LMG 8142 / SP-6) (Leptothrix discophora (strain SP-6)) protein is ATP synthase subunit delta.